A 944-amino-acid chain; its full sequence is Protocadherin gamma-C5 (944 aa).

The signal sequence occupies residues 1–29; the sequence is MGPKTLPQLAGKWQVLCMLSLCCWGWVSG. Cadherin domains are found at residues 30 to 133, 134 to 242, 243 to 350, 351 to 454, 455 to 564, and 571 to 677; these read QLRY…SPSF, ATPE…APTF, QSSV…APEV, LLAS…APRF, NQQL…APAV, and WEHS…MPKS. Residues 30 to 693 are Extracellular-facing; the sequence is QLRYSVVEES…PPERSDLTLY (664 aa). Asn-265, Asn-443, and Asn-547 each carry an N-linked (GlcNAc...) asparagine glycan. The helical transmembrane segment at 694–714 threads the bilayer; that stretch reads LIVALATVSLLSLVTFTFLSA. At 715–944 the chain is on the cytoplasmic side; that stretch reads KCLQGNADGD…KKKSGKKEKK (230 aa). Disordered regions lie at residues 722–747, 812–853, and 914–944; these read DGDG…QSSP, SNTL…WPNN, and ATLT…KEKK. Polar residues predominate over residues 820-853; it reads QQAPPNTDWRFSQAQRPGTSGSQNGDDTGTWPNN. Residues 934–944 are compositionally biased toward basic residues; that stretch reads NKKKSGKKEKK.

The protein localises to the cell membrane. Functionally, potential calcium-dependent cell-adhesion protein. May be involved in the establishment and maintenance of specific neuronal connections in the brain. The protein is Protocadherin gamma-C5 (PCDHGC5) of Pan troglodytes (Chimpanzee).